A 316-amino-acid polypeptide reads, in one-letter code: Annexin D7 (316 aa).

Ala2 is subject to N-acetylalanine. Annexin repeat units lie at residues Pro11–Phe82, Glu83–Ser154, Thr166–Lys237, and Tyr241–Gly312. Residues Phe24, Gly26, Gly28, and Glu68 each coordinate Ca(2+). Ser95 is subject to Phosphoserine. A phosphothreonine mark is found at Thr100 and Thr112. Phosphotyrosine is present on Tyr129. 2 residues coordinate Ca(2+): Ile254 and Gly258. Tyr283 carries the phosphotyrosine modification. Position 288 is a phosphoserine (Ser288). 3 residues coordinate Ca(2+): Asp298, Thr299, and Glu304.

Belongs to the annexin (TC 1.A.31.1) family. As to expression, expressed in flowers.

This Arabidopsis thaliana (Mouse-ear cress) protein is Annexin D7 (ANNAT7).